Here is a 203-residue protein sequence, read N- to C-terminus: DNA-binding transcriptional repressor ScoC (203 aa).

In terms of domain architecture, HTH marR-type spans 13-157; the sequence is ALVFTQKMAQ…MMCMIRHIYG (145 aa). Positions 63-86 form a DNA-binding region, H-T-H motif; it reads ISEIAKFGVMHVSTAFNFSKKLEE. The disordered stretch occupies residues 183–203; sequence KKKAKDSAADEPAEELEPVNS. The segment covering 191 to 203 has biased composition (acidic residues); that stretch reads ADEPAEELEPVNS.

As to quaternary structure, homodimer. Interacts with SinR.

In terms of biological role, negative regulator of protease production and sporulation. Acts by binding directly to the promoter of protease genes (aprE and nprE), and by repressing oligopeptide permease operons (appABCDF and oppABCDF), thereby preventing uptake of oligopeptides required for initiation of sporulation. Acts with SinR as a corepressor of epr expression. Binds to non-m6A-5-methylated 5'-GACGAG-3' sites, tested with scpA; when the target is methylated by DnmA, this repressor no longer binds and transcription is up-regulated. The sequence is that of DNA-binding transcriptional repressor ScoC from Bacillus subtilis (strain 168).